A 424-amino-acid chain; its full sequence is Histidine--tRNA ligase (424 aa).

Belongs to the class-II aminoacyl-tRNA synthetase family. Homodimer.

It localises to the cytoplasm. It carries out the reaction tRNA(His) + L-histidine + ATP = L-histidyl-tRNA(His) + AMP + diphosphate + H(+). This chain is Histidine--tRNA ligase, found in Bacillus licheniformis (strain ATCC 14580 / DSM 13 / JCM 2505 / CCUG 7422 / NBRC 12200 / NCIMB 9375 / NCTC 10341 / NRRL NRS-1264 / Gibson 46).